Reading from the N-terminus, the 47-residue chain is MNIGFDMILAKLPEAYAMFDPLVDVLPVIPLLFLLLAFVWQASVSFR.

A propeptide spanning residues 1-10 (MNIGFDMILA) is cleaved from the precursor. A helical transmembrane segment spans residues 22 to 42 (LVDVLPVIPLLFLLLAFVWQA).

The protein belongs to the PsbK family. PSII is composed of 1 copy each of membrane proteins PsbA, PsbB, PsbC, PsbD, PsbE, PsbF, PsbH, PsbI, PsbJ, PsbK, PsbL, PsbM, PsbT, PsbX, PsbY, PsbZ, Psb30/Ycf12, at least 3 peripheral proteins of the oxygen-evolving complex and a large number of cofactors. It forms dimeric complexes.

The protein localises to the plastid. Its subcellular location is the chloroplast thylakoid membrane. In terms of biological role, one of the components of the core complex of photosystem II (PSII). PSII is a light-driven water:plastoquinone oxidoreductase that uses light energy to abstract electrons from H(2)O, generating O(2) and a proton gradient subsequently used for ATP formation. It consists of a core antenna complex that captures photons, and an electron transfer chain that converts photonic excitation into a charge separation. This Mesostigma viride (Green alga) protein is Photosystem II reaction center protein K.